The chain runs to 448 residues: Exodeoxyribonuclease 7 large subunit (448 aa).

It belongs to the XseA family. In terms of assembly, heterooligomer composed of large and small subunits.

The protein localises to the cytoplasm. It carries out the reaction Exonucleolytic cleavage in either 5'- to 3'- or 3'- to 5'-direction to yield nucleoside 5'-phosphates.. Functionally, bidirectionally degrades single-stranded DNA into large acid-insoluble oligonucleotides, which are then degraded further into small acid-soluble oligonucleotides. The chain is Exodeoxyribonuclease 7 large subunit from Enterococcus faecalis (strain ATCC 700802 / V583).